Here is a 485-residue protein sequence, read N- to C-terminus: Glutamyl-tRNA(Gln) amidotransferase subunit A (485 aa).

Active-site charge relay system residues include K79 and S154. S178 serves as the catalytic Acyl-ester intermediate.

The protein belongs to the amidase family. GatA subfamily. As to quaternary structure, heterotrimer of A, B and C subunits.

The catalysed reaction is L-glutamyl-tRNA(Gln) + L-glutamine + ATP + H2O = L-glutaminyl-tRNA(Gln) + L-glutamate + ADP + phosphate + H(+). Its function is as follows. Allows the formation of correctly charged Gln-tRNA(Gln) through the transamidation of misacylated Glu-tRNA(Gln) in organisms which lack glutaminyl-tRNA synthetase. The reaction takes place in the presence of glutamine and ATP through an activated gamma-phospho-Glu-tRNA(Gln). This is Glutamyl-tRNA(Gln) amidotransferase subunit A from Persephonella marina (strain DSM 14350 / EX-H1).